Here is a 237-residue protein sequence, read N- to C-terminus: Probable transcriptional regulatory protein Fjoh_2560 (237 aa).

The protein belongs to the TACO1 family.

Its subcellular location is the cytoplasm. In Flavobacterium johnsoniae (strain ATCC 17061 / DSM 2064 / JCM 8514 / BCRC 14874 / CCUG 350202 / NBRC 14942 / NCIMB 11054 / UW101) (Cytophaga johnsonae), this protein is Probable transcriptional regulatory protein Fjoh_2560.